The following is a 556-amino-acid chain: Oxygen-dependent choline dehydrogenase (556 aa).

Residue 4–33 (DYIIIGAGSAGNVLATRLTEDPNTTVLLLE) participates in FAD binding. Residue H473 is the Proton acceptor of the active site.

This sequence belongs to the GMC oxidoreductase family. The cofactor is FAD.

The protein resides in the cell membrane. The enzyme catalyses choline + A = betaine aldehyde + AH2. It catalyses the reaction betaine aldehyde + NAD(+) + H2O = glycine betaine + NADH + 2 H(+). It functions in the pathway amine and polyamine biosynthesis; betaine biosynthesis via choline pathway; betaine aldehyde from choline (cytochrome c reductase route): step 1/1. Functionally, involved in the biosynthesis of the osmoprotectant glycine betaine. Catalyzes the oxidation of choline to betaine aldehyde and betaine aldehyde to glycine betaine at the same rate. This is Oxygen-dependent choline dehydrogenase from Escherichia coli O6:H1 (strain CFT073 / ATCC 700928 / UPEC).